Here is a 318-residue protein sequence, read N- to C-terminus: NAD kinase (318 aa).

The Proton acceptor role is filled by Asp84. Residues Asp84 to Gly85, Arg89, Asn159 to Glu160, Arg170, Asp189, and Thr200 to Ser205 each bind NAD(+).

Belongs to the NAD kinase family. The cofactor is a divalent metal cation.

Its subcellular location is the cytoplasm. It carries out the reaction NAD(+) + ATP = ADP + NADP(+) + H(+). In terms of biological role, involved in the regulation of the intracellular balance of NAD and NADP, and is a key enzyme in the biosynthesis of NADP. Catalyzes specifically the phosphorylation on 2'-hydroxyl of the adenosine moiety of NAD to yield NADP. This is NAD kinase from Cutibacterium acnes (strain DSM 16379 / KPA171202) (Propionibacterium acnes).